The sequence spans 83 residues: UPF0297 protein CLK_1948 (83 aa).

It belongs to the UPF0297 family.

This Clostridium botulinum (strain Loch Maree / Type A3) protein is UPF0297 protein CLK_1948.